Consider the following 332-residue polypeptide: Holliday junction branch migration complex subunit RuvB (332 aa).

Residues methionine 1–tyrosine 181 form a large ATPase domain (RuvB-L) region. Residues leucine 20, arginine 21, glycine 62, lysine 65, threonine 66, threonine 67, glutamate 128–phenylalanine 130, arginine 171, tyrosine 181, and arginine 218 contribute to the ATP site. Mg(2+) is bound at residue threonine 66. The segment at alanine 182–aspartate 252 is small ATPAse domain (RuvB-S). A head domain (RuvB-H) region spans residues histidine 255–lysine 332. DNA contacts are provided by arginine 291, arginine 310, arginine 312, and arginine 315.

It belongs to the RuvB family. As to quaternary structure, homohexamer. Forms an RuvA(8)-RuvB(12)-Holliday junction (HJ) complex. HJ DNA is sandwiched between 2 RuvA tetramers; dsDNA enters through RuvA and exits via RuvB. An RuvB hexamer assembles on each DNA strand where it exits the tetramer. Each RuvB hexamer is contacted by two RuvA subunits (via domain III) on 2 adjacent RuvB subunits; this complex drives branch migration. In the full resolvosome a probable DNA-RuvA(4)-RuvB(12)-RuvC(2) complex forms which resolves the HJ.

The protein localises to the cytoplasm. It catalyses the reaction ATP + H2O = ADP + phosphate + H(+). In terms of biological role, the RuvA-RuvB-RuvC complex processes Holliday junction (HJ) DNA during genetic recombination and DNA repair, while the RuvA-RuvB complex plays an important role in the rescue of blocked DNA replication forks via replication fork reversal (RFR). RuvA specifically binds to HJ cruciform DNA, conferring on it an open structure. The RuvB hexamer acts as an ATP-dependent pump, pulling dsDNA into and through the RuvAB complex. RuvB forms 2 homohexamers on either side of HJ DNA bound by 1 or 2 RuvA tetramers; 4 subunits per hexamer contact DNA at a time. Coordinated motions by a converter formed by DNA-disengaged RuvB subunits stimulates ATP hydrolysis and nucleotide exchange. Immobilization of the converter enables RuvB to convert the ATP-contained energy into a lever motion, pulling 2 nucleotides of DNA out of the RuvA tetramer per ATP hydrolyzed, thus driving DNA branch migration. The RuvB motors rotate together with the DNA substrate, which together with the progressing nucleotide cycle form the mechanistic basis for DNA recombination by continuous HJ branch migration. Branch migration allows RuvC to scan DNA until it finds its consensus sequence, where it cleaves and resolves cruciform DNA. This is Holliday junction branch migration complex subunit RuvB from Streptococcus pneumoniae serotype 2 (strain D39 / NCTC 7466).